We begin with the raw amino-acid sequence, 67 residues long: Prokaryotic ubiquitin-like protein Pup (67 aa).

Residues 1-36 (MPQQFEQPQAQQAATQEDDALATTQAAAQTESADQA) form a disordered region. An ARC ATPase binding region spans residues 23-61 (TTQAAAQTESADQADVLDDILDDIESTLETNAEEYVNSF). An Isoglutamyl lysine isopeptide (Glu-Lys) (interchain with K-? in acceptor proteins) cross-link involves residue Glu-67.

The protein belongs to the prokaryotic ubiquitin-like protein family. Strongly interacts with the proteasome-associated ATPase ARC through a hydrophobic interface; the interacting region of Pup lies in its C-terminal half. There is one Pup binding site per ARC hexamer ring.

Its pathway is protein degradation; proteasomal Pup-dependent pathway. Functionally, protein modifier that is covalently attached to lysine residues of substrate proteins, thereby targeting them for proteasomal degradation. The tagging system is termed pupylation. The protein is Prokaryotic ubiquitin-like protein Pup of Bifidobacterium longum (strain DJO10A).